Reading from the N-terminus, the 200-residue chain is Small ribosomal subunit protein uS4 (200 aa).

Positions 22-43 (TGKELERRPYAPGQHGPTQRKK) are disordered. One can recognise an S4 RNA-binding domain in the interval 92–170 (QRLDNIVYRL…VPEYVTFDAE (79 aa)).

Belongs to the universal ribosomal protein uS4 family. As to quaternary structure, part of the 30S ribosomal subunit. Contacts protein S5. The interaction surface between S4 and S5 is involved in control of translational fidelity.

Its function is as follows. One of the primary rRNA binding proteins, it binds directly to 16S rRNA where it nucleates assembly of the body of the 30S subunit. Functionally, with S5 and S12 plays an important role in translational accuracy. The polypeptide is Small ribosomal subunit protein uS4 (Listeria monocytogenes serotype 4a (strain HCC23)).